Here is an 88-residue protein sequence, read N- to C-terminus: CLAVATA3/ESR (CLE)-related protein 42 (88 aa).

A signal peptide spans 1–24; it reads MRSPHITISLVFLFFLFLIIQTHQ. The segment at 69-88 is disordered; the sequence is KMIGANEHGVPSGPNPISNR. 2 positions are modified to hydroxyproline: P79 and P82. P82 carries an O-linked (Ara...) hydroxyproline glycan.

The protein belongs to the CLV3/ESR signal peptide family. The O-glycosylation (arabinosylation) of the hydroxyproline Pro-82 enhances binding affinity of the CLE42p peptide for its receptor. In terms of tissue distribution, expressed at low levels in seedlings, roots and inflorescence.

It localises to the secreted. Its subcellular location is the extracellular space. In terms of biological role, extracellular signal peptide that regulates cell fate. Represses tracheary element differentiation but promotes the formation of procambial cells. In Arabidopsis thaliana (Mouse-ear cress), this protein is CLAVATA3/ESR (CLE)-related protein 42.